Consider the following 118-residue polypeptide: Large ribosomal subunit protein bL20 (118 aa).

This sequence belongs to the bacterial ribosomal protein bL20 family.

Its function is as follows. Binds directly to 23S ribosomal RNA and is necessary for the in vitro assembly process of the 50S ribosomal subunit. It is not involved in the protein synthesizing functions of that subunit. The polypeptide is Large ribosomal subunit protein bL20 (Alteromonas mediterranea (strain DSM 17117 / CIP 110805 / LMG 28347 / Deep ecotype)).